We begin with the raw amino-acid sequence, 413 residues long: Variant surface glycoprotein YnAT 1.3 (413 aa).

The first 22 residues, 1–22 (MLDNSRARSIVHLLILLKAHVI), serve as a signal peptide directing secretion. N91, N361, and N379 each carry an N-linked (GlcNAc...) asparagine glycan. A lipid anchor (GPI-anchor amidated asparagine) is attached at N379. Residues 380 to 413 (SSNPTSRQNSVVQEPTTVSAAAITPLILPWTLLI) constitute a propeptide, removed in mature form.

Its subcellular location is the cell membrane. VSG forms a coat on the surface of the parasite. The trypanosome evades the immune response of the host by expressing a series of antigenically distinct VSGs from an estimated 1000 VSG genes. The protein is Variant surface glycoprotein YnAT 1.3 of Trypanosoma congolense.